The following is a 415-amino-acid chain: Prostacyclin receptor (415 aa).

The segment at 1–21 (MMASDGHPGPPSVTPGSPLSA) is disordered. Over 1-44 (MMASDGHPGPPSVTPGSPLSAGGREWQGMAGSCWNITYVQDSVG) the chain is Extracellular. Cystine bridges form between C33–C193 and C120–C198. Residue N35 is glycosylated (N-linked (GlcNAc...) asparagine). Residues 45 to 66 (PATSTLMFVAGVVGNGLALGIL) form a helical membrane-spanning segment. Residues 67–79 (GARRRSHPSAFAV) are Cytoplasmic-facing. A helical transmembrane segment spans residues 80 to 104 (LVTGLAVTDLLGTCFLSPAVFVAYA). At 105 to 122 (RNSSLLGLAHGGTMLCDT) the chain is on the extracellular side. Residues 123 to 143 (FAFAMTFFGLASTLILFAMAV) traverse the membrane as a helical segment. The Cytoplasmic portion of the chain corresponds to 144–162 (ERCLALSHPYLYAQLDGPR). Residues 163 to 186 (CARFALPSIYAFCCLFCSLPLLGL) traverse the membrane as a helical segment. The Extracellular portion of the chain corresponds to 187 to 215 (GEHQQYCPGSWCFIRMRSAQPGGCAFSLA). Residues 216–236 (YASLMALLVTSIFFCNGSVTL) form a helical membrane-spanning segment. Residues 237–263 (SLYHMYRQQRRHHGSFVPTSRAREDEV) lie on the Cytoplasmic side of the membrane. A helical transmembrane segment spans residues 264–288 (YHLILLALMTVIMAVCSLPLMIRGF). The Extracellular portion of the chain corresponds to 289 to 301 (TQAIAPDSREMGD). Residues 302-322 (LLAFRFNAFNPILDPWVFILF) form a helical membrane-spanning segment. Residues 323–415 (RKAVFQRLKF…SEAIAACSLC (93 aa)) are Cytoplasmic-facing. Residues 349 to 370 (PLSRPASGRRDPPAPTSLQAKE) form a disordered region. S365 bears the Phosphoserine mark. C412 is subject to Cysteine methyl ester. A lipid anchor (S-farnesyl cysteine) is attached at C412. Positions 413-415 (SLC) are cleaved as a propeptide — removed in mature form.

The protein belongs to the G-protein coupled receptor 1 family. As to quaternary structure, interacts (non-isoprenylated C-terminus) with PDZK1. Isoprenylation does not influence ligand binding but is required for efficient coupling to the effectors adenylyl cyclase and phospholipase C.

Its subcellular location is the cell membrane. Its function is as follows. Receptor for prostacyclin (prostaglandin I2 or PGI2). The activity of this receptor is mediated by G(s) proteins which activate adenylate cyclase. This chain is Prostacyclin receptor (Ptgir), found in Mus musculus (Mouse).